A 146-amino-acid polypeptide reads, in one-letter code: Chorion class A protein Ld3/Ld29 (146 aa).

The signal sequence occupies residues 1 to 21 (MNTFALLSVFIQACLVQSVFS).

The protein belongs to the chorion protein family.

This protein is one of many from the eggshell of the gypsy moth. The chain is Chorion class A protein Ld3/Ld29 from Lymantria dispar (Gypsy moth).